We begin with the raw amino-acid sequence, 432 residues long: D-amino acid dehydrogenase (432 aa).

An FAD-binding site is contributed by valine 3–tryptophan 17.

It belongs to the DadA oxidoreductase family. The cofactor is FAD.

It carries out the reaction a D-alpha-amino acid + A + H2O = a 2-oxocarboxylate + AH2 + NH4(+). It participates in amino-acid degradation; D-alanine degradation; NH(3) and pyruvate from D-alanine: step 1/1. In terms of biological role, oxidative deamination of D-amino acids. This is D-amino acid dehydrogenase from Salmonella choleraesuis (strain SC-B67).